A 406-amino-acid polypeptide reads, in one-letter code: Olfactomedin-like protein 3 (406 aa).

An N-terminal signal peptide occupies residues 1–21 (MGPSAPLLLLFFLSWTGPLQG). Residues 25–101 (HLVEYMERRL…REVDYLETQN (77 aa)) are a coiled coil. An Olfactomedin-like domain is found at 134-401 (DCSYTVAQVR…QIVYKLEMKK (268 aa)). Residues cysteine 135 and cysteine 328 are joined by a disulfide bond. N-linked (GlcNAc...) asparagine glycans are attached at residues asparagine 177 and asparagine 248.

Belongs to the OLFML3 family.

The protein localises to the secreted. Secreted scaffold protein that plays an essential role in dorsoventral patterning during early development. Stabilizes axial formation by restricting chordin (CHRD) activity on the dorsal side. Acts by facilitating the association between the tolloid proteases and their substrate chordin (CHRD), leading to enhance chordin (CHRD) degradation. May have matrix-related function involved in placental and embryonic development, or play a similar role in other physiological processes. The chain is Olfactomedin-like protein 3 (Olfml3) from Mus musculus (Mouse).